Consider the following 414-residue polypeptide: uncharacterized protein (414 aa).

This is an uncharacterized protein from Rickettsia conorii (strain ATCC VR-613 / Malish 7).